The following is a 334-amino-acid chain: Malate dehydrogenase, cytoplasmic (334 aa).

11 to 17 (GAAGQIA) is an NAD(+) binding site. 2 residues coordinate substrate: R92 and R98. NAD(+) is bound by residues N105, Q112, and 129–131 (VGN). The substrate site is built by N131 and R162. H187 functions as the Proton acceptor in the catalytic mechanism.

This sequence belongs to the LDH/MDH superfamily. MDH type 2 family. As to quaternary structure, homodimer.

It is found in the cytoplasm. The protein resides in the cytosol. It catalyses the reaction (S)-malate + NAD(+) = oxaloacetate + NADH + H(+). The enzyme catalyses (S)-2-hydroxyglutarate + NAD(+) = 2-oxoglutarate + NADH + H(+). Functionally, catalyzes the reduction of aromatic alpha-keto acids in the presence of NADH. Plays essential roles in the malate-aspartate shuttle and the tricarboxylic acid cycle, important in mitochondrial NADH supply for oxidative phosphorylation. Catalyzes the reduction of 2-oxoglutarate to 2-hydroxyglutarate, leading to elevated reactive oxygen species (ROS). This Xenopus laevis (African clawed frog) protein is Malate dehydrogenase, cytoplasmic (mdh1).